The following is a 152-amino-acid chain: MANLQERLTDIIRPAVEALEFELWGVEFIRAGKFSTLRVYIDHPEGISVDNCADVSYQVSSLLDVEDPINVEYNLEVSSPGMERPFFNAQQMQPYINETVAFELVAAQKNKRKFKAELIAVEGEELTLAVDNDTLQVNMRDVKNAHLVPAFD.

The protein belongs to the RimP family.

Its subcellular location is the cytoplasm. In terms of biological role, required for maturation of 30S ribosomal subunits. The chain is Ribosome maturation factor RimP from Idiomarina loihiensis (strain ATCC BAA-735 / DSM 15497 / L2-TR).